We begin with the raw amino-acid sequence, 223 residues long: Cytidylate kinase (223 aa).

12-20 (GPSGVGKGT) is a binding site for ATP.

This sequence belongs to the cytidylate kinase family. Type 1 subfamily.

The protein localises to the cytoplasm. It carries out the reaction CMP + ATP = CDP + ADP. The catalysed reaction is dCMP + ATP = dCDP + ADP. This is Cytidylate kinase from Xylella fastidiosa (strain M12).